The following is an 877-amino-acid chain: Probable alpha/beta-glucosidase agdC (877 aa).

The signal sequence occupies residues 1–14 (MLGSLLLLAPLAGA). N-linked (GlcNAc...) asparagine glycans are attached at residues asparagine 171, asparagine 293, and asparagine 373. Residue aspartate 422 is the Nucleophile of the active site. Glutamate 425 is an active-site residue. Residues 432–476 (DPCTDPERYSSENNLPPAPPPVRSSSPRPLPGFPADFQPSSASRS) are disordered. Positions 447 to 463 (PPAPPPVRSSSPRPLPG) are enriched in pro residues. Asparagine 508 carries an N-linked (GlcNAc...) asparagine glycan. The Proton donor role is filled by aspartate 573. 3 N-linked (GlcNAc...) asparagine glycosylation sites follow: asparagine 574, asparagine 610, and asparagine 744.

It belongs to the glycosyl hydrolase 31 family.

It localises to the secreted. The catalysed reaction is Hydrolysis of terminal, non-reducing (1-&gt;4)-linked alpha-D-glucose residues with release of alpha-D-glucose.. It carries out the reaction Hydrolysis of terminal, non-reducing beta-D-glucosyl residues with release of beta-D-glucose.. In terms of biological role, glucosidase involved in the degradation of cellulosic biomass. Has both alpha- and beta-glucosidase activity. This chain is Probable alpha/beta-glucosidase agdC (agdC), found in Aspergillus flavus (strain ATCC 200026 / FGSC A1120 / IAM 13836 / NRRL 3357 / JCM 12722 / SRRC 167).